We begin with the raw amino-acid sequence, 288 residues long: Acetyl-coenzyme A carboxylase carboxyl transferase subunit beta (288 aa).

In terms of domain architecture, CoA carboxyltransferase N-terminal spans 34-288; it reads LFAKCPACKH…HLVAFHGGGQ (255 aa). Zn(2+) is bound by residues cysteine 38, cysteine 41, cysteine 56, and cysteine 59. The segment at 38 to 59 adopts a C4-type zinc-finger fold; that stretch reads CPACKHMIYKKDLGLAKICPTC.

The protein belongs to the AccD/PCCB family. Acetyl-CoA carboxylase is a heterohexamer composed of biotin carboxyl carrier protein (AccB), biotin carboxylase (AccC) and two subunits each of ACCase subunit alpha (AccA) and ACCase subunit beta (AccD). It depends on Zn(2+) as a cofactor.

The protein localises to the cytoplasm. It carries out the reaction N(6)-carboxybiotinyl-L-lysyl-[protein] + acetyl-CoA = N(6)-biotinyl-L-lysyl-[protein] + malonyl-CoA. Its pathway is lipid metabolism; malonyl-CoA biosynthesis; malonyl-CoA from acetyl-CoA: step 1/1. Its function is as follows. Component of the acetyl coenzyme A carboxylase (ACC) complex. Biotin carboxylase (BC) catalyzes the carboxylation of biotin on its carrier protein (BCCP) and then the CO(2) group is transferred by the transcarboxylase to acetyl-CoA to form malonyl-CoA. In Streptococcus dysgalactiae subsp. equisimilis (strain GGS_124), this protein is Acetyl-coenzyme A carboxylase carboxyl transferase subunit beta.